The chain runs to 213 residues: Probable elongation factor 1-beta/1-delta 1 (213 aa).

The protein belongs to the EF-1-beta/EF-1-delta family. EF-1 is composed of 4 subunits: alpha, beta, delta, and gamma.

In terms of biological role, EF-1-beta and EF-1-delta stimulate the exchange of GDP bound to EF-1-alpha to GTP. This is Probable elongation factor 1-beta/1-delta 1 (eef-1B.1) from Caenorhabditis elegans.